Reading from the N-terminus, the 165-residue chain is Endoribonuclease YbeY (165 aa).

Residues histidine 130, histidine 134, and histidine 140 each contribute to the Zn(2+) site.

It belongs to the endoribonuclease YbeY family. Zn(2+) serves as cofactor.

It localises to the cytoplasm. Its function is as follows. Single strand-specific metallo-endoribonuclease involved in late-stage 70S ribosome quality control and in maturation of the 3' terminus of the 16S rRNA. The sequence is that of Endoribonuclease YbeY from Streptococcus pneumoniae serotype 4 (strain ATCC BAA-334 / TIGR4).